A 533-amino-acid chain; its full sequence is Retinoid isomerohydrolase (533 aa).

An N-acetylserine modification is found at Ser2. Cys112 carries the S-palmitoyl cysteine; in membrane form lipid modification. Fe cation is bound at residue His180. The S-palmitoyl cysteine; in membrane form moiety is linked to residue Cys231. Residues His241 and His313 each contribute to the Fe cation site. Residues Cys329 and Cys330 are each lipidated (S-palmitoyl cysteine; in membrane form). Position 527 (His527) interacts with Fe cation.

Belongs to the carotenoid oxygenase family. The cofactor is Fe(2+). Palmitoylation by LRAT regulates ligand binding specificity; the palmitoylated form (membrane form) specifically binds all-trans-retinyl-palmitate, while the soluble unpalmitoylated form binds all-trans-retinol (vitamin A). As to expression, retinal pigment epithelium specific.

It is found in the cell membrane. The catalysed reaction is an all-trans-retinyl ester + H2O = 11-cis-retinol + a fatty acid + H(+). The enzyme catalyses lutein = (3R,3'S)-zeaxanthin. It carries out the reaction all-trans-retinyl hexadecanoate + H2O = 11-cis-retinol + hexadecanoate + H(+). In terms of biological role, critical isomerohydrolase in the retinoid cycle involved in regeneration of 11-cis-retinal, the chromophore of rod and cone opsins. Catalyzes the cleavage and isomerization of all-trans-retinyl fatty acid esters to 11-cis-retinol which is further oxidized by 11-cis retinol dehydrogenase to 11-cis-retinal for use as visual chromophore. Essential for the production of 11-cis retinal for both rod and cone photoreceptors. Also capable of catalyzing the isomerization of lutein to meso-zeaxanthin an eye-specific carotenoid. The soluble form binds vitamin A (all-trans-retinol), making it available for LRAT processing to all-trans-retinyl ester. The membrane form, palmitoylated by LRAT, binds all-trans-retinyl esters, making them available for IMH (isomerohydrolase) processing to all-cis-retinol. The soluble form is regenerated by transferring its palmitoyl groups onto 11-cis-retinol, a reaction catalyzed by LRAT. The chain is Retinoid isomerohydrolase (RPE65) from Cynops pyrrhogaster (Japanese fire-bellied newt).